A 1129-amino-acid chain; its full sequence is Phytochrome A type 4 (1129 aa).

The span at 1–21 (MSSSRPASSSSSRNRQSSRAR) shows a compositional bias: low complexity. The disordered stretch occupies residues 1–24 (MSSSRPASSSSSRNRQSSRARVLA). The GAF domain occupies 217-402 (SMEVLCNTVV…VFAVHVNREF (186 aa)). A phytochromobilin-binding site is contributed by Cys-322. PAS domains lie at 618–688 (VTSE…LQGK) and 748–822 (VEGD…VSLC). The region spanning 902 to 1122 (YMRHAINNPL…TFILTAELAS (221 aa)) is the Histidine kinase domain.

This sequence belongs to the phytochrome family. In terms of assembly, homodimer. In terms of processing, contains one covalently linked phytochromobilin chromophore.

Regulatory photoreceptor which exists in two forms that are reversibly interconvertible by light: the Pr form that absorbs maximally in the red region of the spectrum and the Pfr form that absorbs maximally in the far-red region. Photoconversion of Pr to Pfr induces an array of morphogenic responses, whereas reconversion of Pfr to Pr cancels the induction of those responses. Pfr controls the expression of a number of nuclear genes including those encoding the small subunit of ribulose-bisphosphate carboxylase, chlorophyll A/B binding protein, protochlorophyllide reductase, rRNA, etc. It also controls the expression of its own gene(s) in a negative feedback fashion. In Avena sativa (Oat), this protein is Phytochrome A type 4 (PHYA4).